We begin with the raw amino-acid sequence, 626 residues long: UvrABC system protein C (626 aa).

The GIY-YIG domain occupies 20-97 (ECSGVYKMLD…IKKFQPKFNI (78 aa)). The region spanning 207–242 (IALQANLSKKMQELSSQMRFEEAAEIRDRIKALSYV) is the UVR domain.

Belongs to the UvrC family. In terms of assembly, interacts with UvrB in an incision complex.

It is found in the cytoplasm. The UvrABC repair system catalyzes the recognition and processing of DNA lesions. UvrC both incises the 5' and 3' sides of the lesion. The N-terminal half is responsible for the 3' incision and the C-terminal half is responsible for the 5' incision. This is UvrABC system protein C from Rickettsia prowazekii (strain Madrid E).